A 313-amino-acid polypeptide reads, in one-letter code: tRNA dimethylallyltransferase (313 aa).

10 to 17 (GPTASGKT) lines the ATP pocket. 12 to 17 (TASGKT) lines the substrate pocket. Interaction with substrate tRNA stretches follow at residues 35-38 (DSAM), 159-163 (QRIQR), and 240-245 (RCVGYR).

Belongs to the IPP transferase family. In terms of assembly, monomer. Mg(2+) is required as a cofactor.

The catalysed reaction is adenosine(37) in tRNA + dimethylallyl diphosphate = N(6)-dimethylallyladenosine(37) in tRNA + diphosphate. Functionally, catalyzes the transfer of a dimethylallyl group onto the adenine at position 37 in tRNAs that read codons beginning with uridine, leading to the formation of N6-(dimethylallyl)adenosine (i(6)A). This chain is tRNA dimethylallyltransferase, found in Legionella pneumophila (strain Paris).